The sequence spans 452 residues: MQIVEKSGEGLSRVFGVTVPASELATRLEARIAEVAPQMNVKGFRPGKVPTAHVRRLYGKALMGEVIEQALNETTTKVLEDNKLRPAGQPELNPSSDMDKVIAGGEDLSFDLAVEVMPEFEPIDPTSIELVKPVYKVSDEEVQEALDELAKQARTYEPRTGKSLKAKDGDQLLIDFVGTIDGVEFAGGKAEGAELVLGSGQFIPGFEDQLVGAKPGDDVVVKVKFPEEYQAKDLAGKDAEFATKVQEVRAPVDGKADDELAKRLGLSDLAALTELLKSNLAGRYDNSSRFKLKRALLDVLDTKHDFPLPPRMVDAEFAGIWQQVEADKARGGLPPEDAEKTEDQLKDEYKKIAERRVRLGLVLAEIGRKNDVVVTDQELTDAIMREARQYGAQAQQVFDMYRQRADLQAALRAPIYEDKVVDLIFGKAKIEEKEVSKDELLEEDDLPEGYGG.

Residues 169-254 (GDQLLIDFVG…VQEVRAPVDG (86 aa)) form the PPIase FKBP-type domain.

This sequence belongs to the FKBP-type PPIase family. Tig subfamily.

The protein localises to the cytoplasm. It carries out the reaction [protein]-peptidylproline (omega=180) = [protein]-peptidylproline (omega=0). Its function is as follows. Involved in protein export. Acts as a chaperone by maintaining the newly synthesized protein in an open conformation. Functions as a peptidyl-prolyl cis-trans isomerase. In Caulobacter vibrioides (strain ATCC 19089 / CIP 103742 / CB 15) (Caulobacter crescentus), this protein is Trigger factor (tig).